The following is a 328-amino-acid chain: Malate dehydrogenase (328 aa).

11–17 (GAAGQIG) lines the NAD(+) pocket. Arg-94 and Arg-100 together coordinate substrate. Residues Asn-107, Gln-114, and 131-133 (VGN) contribute to the NAD(+) site. 2 residues coordinate substrate: Asn-133 and Arg-164. The active-site Proton acceptor is His-189.

It belongs to the LDH/MDH superfamily. MDH type 2 family.

The enzyme catalyses (S)-malate + NAD(+) = oxaloacetate + NADH + H(+). Its function is as follows. Catalyzes the reversible oxidation of malate to oxaloacetate. In Stenotrophomonas maltophilia (strain K279a), this protein is Malate dehydrogenase.